The following is an 881-amino-acid chain: Mechanosensitive ion channel protein 5 (881 aa).

Basic and acidic residues-rich tracts occupy residues 1–12 (MAAVDSTDRRDF) and 48–59 (DGEKGKNDKKGD). The segment at 1–248 (MAAVDSTDRR…RNGFEEEEEE (248 aa)) is disordered. Residues 115–145 (ELQSNTPPRPATASNTPRRGLTTISESSSPV) show a composition bias toward polar residues. Residues 169–179 (EEGRNRDEAEV) are compositionally biased toward basic and acidic residues. Phosphoserine is present on serine 231. 6 helical membrane passes run 265-285 (LSFWVFLEWISLVLIVTSLVC), 309-329 (VLVLICGRLVSSWIVRIIVFL), 349-369 (KSVQNCLWLGLVLLAWHFLFD), 387-407 (VLVCLLVALIIWLVKTILVKV), 642-662 (IINVVIGIIIIIIWLLILGIA), and 677-697 (VAFVFGNSCKTIFEAIIFLFV). A disordered region spans residues 861 to 881 (PTANPTSSDRIPPSWMQQRGP). The segment covering 864–881 (NPTSSDRIPPSWMQQRGP) has biased composition (polar residues).

It belongs to the MscS (TC 1.A.23) family.

Its subcellular location is the membrane. Its function is as follows. Mechanosensitive channel that opens in response to stretch forces in the membrane lipid bilayer. The protein is Mechanosensitive ion channel protein 5 (MSL5) of Arabidopsis thaliana (Mouse-ear cress).